Reading from the N-terminus, the 235-residue chain is Phosphoribosylaminoimidazole-succinocarboxamide synthase (235 aa).

The protein belongs to the SAICAR synthetase family.

It carries out the reaction 5-amino-1-(5-phospho-D-ribosyl)imidazole-4-carboxylate + L-aspartate + ATP = (2S)-2-[5-amino-1-(5-phospho-beta-D-ribosyl)imidazole-4-carboxamido]succinate + ADP + phosphate + 2 H(+). It participates in purine metabolism; IMP biosynthesis via de novo pathway; 5-amino-1-(5-phospho-D-ribosyl)imidazole-4-carboxamide from 5-amino-1-(5-phospho-D-ribosyl)imidazole-4-carboxylate: step 1/2. This is Phosphoribosylaminoimidazole-succinocarboxamide synthase from Chlorobaculum tepidum (strain ATCC 49652 / DSM 12025 / NBRC 103806 / TLS) (Chlorobium tepidum).